Reading from the N-terminus, the 410-residue chain is Tegument protein VP16 homolog (410 aa).

The disordered stretch occupies residues 388 to 410; it reads PPSPSEILPGDPPRPPTCGFLTR.

The protein belongs to the herpesviridae tegument protein VP16 protein family. In terms of assembly, associates with the VP16-induced complex; binding to host HCFC1 activates VP16 for association with the octamer motif-binding host protein POU2F1, to form a multiprotein-DNA complex responsible for activating transcription of the viral immediate early genes.

It localises to the virion tegument. The protein resides in the host nucleus. In terms of biological role, transcriptional activator of immediate-early (IE) gene products (alpha genes). Acts as a key activator of lytic infection by initiating the lytic program through the assembly of the transcriptional regulatory VP16-induced complex composed of VP16 and two cellular factors, HCFC1 and POU2F1. VP16-induced complex represents a regulatory switch: when it is on, it promotes IE-gene expression and thus lytic infection, and when it is off, it limits IE-gene transcription favoring latent infection. Its function is as follows. May play a role in the aggregation of tegument proteins around nucleocapsids during virus morphogenesis. In Varicella-zoster virus (strain Dumas) (HHV-3), this protein is Tegument protein VP16 homolog.